We begin with the raw amino-acid sequence, 420 residues long: Hemocyanin 2-c chain (420 aa).

Residues 1 to 12 are compositionally biased toward basic residues; that stretch reads DFGHSKKIRKNV. Residues 1–20 form a disordered region; sequence DFGHSKKIRKNVHSLTAEEQ. His-46 is a binding site for Cu cation. A disulfide bridge links Cys-52 with Cys-63. Positions 66, 73, 185, 189, and 216 each coordinate Cu cation. 2 disulfides stabilise this stretch: Cys-175–Cys-242 and Cys-335–Cys-342.

In terms of processing, O-glycosylated. Hemolymph.

It is found in the secreted. Its subcellular location is the extracellular space. In terms of biological role, hemocyanins are copper-containing oxygen carriers occurring freely dissolved in the hemolymph of many mollusks and arthropods. This chain is Hemocyanin 2-c chain, found in Megathura crenulata (Giant keyhole limpet).